Consider the following 618-residue polypeptide: Dihydroxy-acid dehydratase (618 aa).

Asp81 is a Mg(2+) binding site. Residue Cys122 participates in [2Fe-2S] cluster binding. Mg(2+) is bound by residues Asp123 and Lys124. Lys124 is subject to N6-carboxylysine. Cys195 is a binding site for [2Fe-2S] cluster. Glu491 provides a ligand contact to Mg(2+). The active-site Proton acceptor is the Ser517.

This sequence belongs to the IlvD/Edd family. As to quaternary structure, homodimer. It depends on [2Fe-2S] cluster as a cofactor. Mg(2+) serves as cofactor.

It carries out the reaction (2R)-2,3-dihydroxy-3-methylbutanoate = 3-methyl-2-oxobutanoate + H2O. The catalysed reaction is (2R,3R)-2,3-dihydroxy-3-methylpentanoate = (S)-3-methyl-2-oxopentanoate + H2O. It functions in the pathway amino-acid biosynthesis; L-isoleucine biosynthesis; L-isoleucine from 2-oxobutanoate: step 3/4. The protein operates within amino-acid biosynthesis; L-valine biosynthesis; L-valine from pyruvate: step 3/4. Its function is as follows. Functions in the biosynthesis of branched-chain amino acids. Catalyzes the dehydration of (2R,3R)-2,3-dihydroxy-3-methylpentanoate (2,3-dihydroxy-3-methylvalerate) into 2-oxo-3-methylpentanoate (2-oxo-3-methylvalerate) and of (2R)-2,3-dihydroxy-3-methylbutanoate (2,3-dihydroxyisovalerate) into 2-oxo-3-methylbutanoate (2-oxoisovalerate), the penultimate precursor to L-isoleucine and L-valine, respectively. The chain is Dihydroxy-acid dehydratase from Rhodopseudomonas palustris (strain TIE-1).